The sequence spans 180 residues: Large ribosomal subunit protein uL6 (180 aa).

Belongs to the universal ribosomal protein uL6 family. Part of the 50S ribosomal subunit.

Its function is as follows. This protein binds to the 23S rRNA, and is important in its secondary structure. It is located near the subunit interface in the base of the L7/L12 stalk, and near the tRNA binding site of the peptidyltransferase center. This chain is Large ribosomal subunit protein uL6, found in Borrelia garinii subsp. bavariensis (strain ATCC BAA-2496 / DSM 23469 / PBi) (Borreliella bavariensis).